The chain runs to 73 residues: Large ribosomal subunit protein bL31 (73 aa).

It belongs to the bacterial ribosomal protein bL31 family. Type A subfamily. In terms of assembly, part of the 50S ribosomal subunit.

Binds the 23S rRNA. In Mesorhizobium japonicum (strain LMG 29417 / CECT 9101 / MAFF 303099) (Mesorhizobium loti (strain MAFF 303099)), this protein is Large ribosomal subunit protein bL31.